The chain runs to 264 residues: Thymidylate synthase 2 (264 aa).

Position 21 (Arg21) interacts with dUMP. His51 is a binding site for (6R)-5,10-methylene-5,6,7,8-tetrahydrofolate. A dUMP-binding site is contributed by 126–127; that stretch reads RR. Catalysis depends on Cys146, which acts as the Nucleophile. Residues 166-169, Asn177, and 207-209 contribute to the dUMP site; these read RSAD and HIY. Asp169 contacts (6R)-5,10-methylene-5,6,7,8-tetrahydrofolate. A (6R)-5,10-methylene-5,6,7,8-tetrahydrofolate-binding site is contributed by Ser263.

It belongs to the thymidylate synthase family. Bacterial-type ThyA subfamily. Homodimer.

Its subcellular location is the cytoplasm. It carries out the reaction dUMP + (6R)-5,10-methylene-5,6,7,8-tetrahydrofolate = 7,8-dihydrofolate + dTMP. The protein operates within pyrimidine metabolism; dTTP biosynthesis. Functionally, catalyzes the reductive methylation of 2'-deoxyuridine-5'-monophosphate (dUMP) to 2'-deoxythymidine-5'-monophosphate (dTMP) while utilizing 5,10-methylenetetrahydrofolate (mTHF) as the methyl donor and reductant in the reaction, yielding dihydrofolate (DHF) as a by-product. This enzymatic reaction provides an intracellular de novo source of dTMP, an essential precursor for DNA biosynthesis. The sequence is that of Thymidylate synthase 2 from Bacillus amyloliquefaciens (Bacillus velezensis).